The chain runs to 507 residues: ATP synthase subunit alpha, chloroplastic (507 aa).

170 to 177 (GDRQTGKT) lines the ATP pocket.

This sequence belongs to the ATPase alpha/beta chains family. In terms of assembly, F-type ATPases have 2 components, CF(1) - the catalytic core - and CF(0) - the membrane proton channel. CF(1) has five subunits: alpha(3), beta(3), gamma(1), delta(1), epsilon(1). CF(0) has four main subunits: a, b, b' and c.

The protein localises to the plastid. It is found in the chloroplast thylakoid membrane. It carries out the reaction ATP + H2O + 4 H(+)(in) = ADP + phosphate + 5 H(+)(out). Produces ATP from ADP in the presence of a proton gradient across the membrane. The alpha chain is a regulatory subunit. The chain is ATP synthase subunit alpha, chloroplastic from Eucalyptus globulus subsp. globulus (Tasmanian blue gum).